We begin with the raw amino-acid sequence, 407 residues long: Amylovoran biosynthesis glycosyltransferase AmsK (407 aa).

The protein belongs to the glycosyltransferase group 1 family. Glycosyltransferase 4 subfamily.

Its pathway is glycan metabolism; exopolysaccharide biosynthesis. Involved in the biosynthesis of amylovoran which functions as a virulence factor. This is Amylovoran biosynthesis glycosyltransferase AmsK (amsK) from Erwinia amylovora (Fire blight bacteria).